The sequence spans 701 residues: DNA ligase (701 aa).

Residues 1 to 21 (MSAKSTPDAGPQEQATEAEAE) form a disordered region. Residues 50 to 54 (DADFD), 100 to 101 (SL), and Glu-130 contribute to the NAD(+) site. Lys-132 (N6-AMP-lysine intermediate) is an active-site residue. NAD(+) is bound by residues Arg-153, Glu-193, Lys-309, and Lys-333. Zn(2+) is bound by residues Cys-427, Cys-430, Cys-446, and Cys-452. The BRCT domain occupies 616-701 (SIARTLEGLS…LENGPQAPEG (86 aa)).

The protein belongs to the NAD-dependent DNA ligase family. LigA subfamily. It depends on Mg(2+) as a cofactor. Mn(2+) is required as a cofactor.

It catalyses the reaction NAD(+) + (deoxyribonucleotide)n-3'-hydroxyl + 5'-phospho-(deoxyribonucleotide)m = (deoxyribonucleotide)n+m + AMP + beta-nicotinamide D-nucleotide.. In terms of biological role, DNA ligase that catalyzes the formation of phosphodiester linkages between 5'-phosphoryl and 3'-hydroxyl groups in double-stranded DNA using NAD as a coenzyme and as the energy source for the reaction. It is essential for DNA replication and repair of damaged DNA. This Mycobacterium sp. (strain KMS) protein is DNA ligase.